A 498-amino-acid polypeptide reads, in one-letter code: ATP synthase subunit beta, chloroplastic (498 aa).

172–179 (GGAGVGKT) serves as a coordination point for ATP.

It belongs to the ATPase alpha/beta chains family. F-type ATPases have 2 components, CF(1) - the catalytic core - and CF(0) - the membrane proton channel. CF(1) has five subunits: alpha(3), beta(3), gamma(1), delta(1), epsilon(1). CF(0) has four main subunits: a(1), b(1), b'(1) and c(9-12).

Its subcellular location is the plastid. The protein localises to the chloroplast thylakoid membrane. The catalysed reaction is ATP + H2O + 4 H(+)(in) = ADP + phosphate + 5 H(+)(out). Its function is as follows. Produces ATP from ADP in the presence of a proton gradient across the membrane. The catalytic sites are hosted primarily by the beta subunits. The protein is ATP synthase subunit beta, chloroplastic of Schisandra sphenanthera (Southern magnolia vine).